The following is a 493-amino-acid chain: Tripartite motif-containing protein 5 (493 aa).

Ala-2 bears the N-acetylalanine mark. Residues 15 to 59 (CPICLELLTQPLSLDCGHSFCQACLTANHKKSMLDKGESSCPVCR) form an RING-type zinc finger. At Ser-86 the chain carries Phosphoserine. A B box-type zinc finger spans residues 90–132 (QKVDHCAHHGEKLLLFCQEDGKVICWLCERSQEHRGHHTFLTE). 4 residues coordinate Zn(2+): Cys-95, His-98, Cys-117, and His-123. Residues 131–240 (TEEVAREYQV…LISDLERRLQ (110 aa)) are a coiled coil. The tract at residues 185–198 (FEQLRDILDWEESN) is required for interaction with GABARAP and for autophagy. The B30.2/SPRY domain occupies 281–493 (LKGMLEVFRE…VPMTLCSPSS (213 aa)).

Belongs to the TRIM/RBCC family. Can form homodimers and homotrimers. In addition to lower-order dimerization, also exhibits a higher-order multimerization and both low- and high-order multimerizations are essential for its restriction activity. Interacts with BTBD1 and BTBD2. Interacts with PSMC4, PSMC5, PSMD7 and HSPA8/HSC70. Interacts (via B30.2/SPRY domain) with HSPA1A/B. Interacts with PSMC2, MAP3K7/TAK1, TAB2 and TAB3. Interacts with SQSTM1. Interacts with TRIM6 and TRIM34. Interacts with ULK1 (phosphorylated form), GABARAP, GABARAPL1, GABARAPL2, MAP1LC3A, MAP1LC3C and BECN1. In terms of processing, degraded in a proteasome-independent fashion in the absence of viral infection but in a proteasome-dependent fashion following exposure to restriction sensitive virus. Autoubiquitinated in a RING finger- and UBE2D2-dependent manner. Monoubiquitinated by TRIM21. Deubiquitinated by Yersinia YopJ. Ubiquitination may not lead to proteasomal degradation.

It is found in the cytoplasm. The protein resides in the nucleus. It carries out the reaction S-ubiquitinyl-[E2 ubiquitin-conjugating enzyme]-L-cysteine + [acceptor protein]-L-lysine = [E2 ubiquitin-conjugating enzyme]-L-cysteine + N(6)-ubiquitinyl-[acceptor protein]-L-lysine.. Its pathway is protein modification; protein ubiquitination. Functionally, capsid-specific restriction factor that prevents infection from non-host-adapted retroviruses. Blocks viral replication early in the life cycle, after viral entry but before reverse transcription. In addition to acting as a capsid-specific restriction factor, also acts as a pattern recognition receptor that activates innate immune signaling in response to the retroviral capsid lattice. Binding to the viral capsid triggers its E3 ubiquitin ligase activity, and in concert with the heterodimeric ubiquitin conjugating enzyme complex UBE2V1-UBE2N (also known as UBC13-UEV1A complex) generates 'Lys-63'-linked polyubiquitin chains, which in turn are catalysts in the autophosphorylation of the MAP3K7/TAK1 complex (includes TAK1, TAB2, and TAB3). Activation of the MAP3K7/TAK1 complex by autophosphorylation results in the induction and expression of NF-kappa-B and MAPK-responsive inflammatory genes, thereby leading to an innate immune response in the infected cell. Plays a role in regulating autophagy through activation of autophagy regulator BECN1 by causing its dissociation from its inhibitors BCL2 and TAB2. The protein is Tripartite motif-containing protein 5 (TRIM5) of Pan troglodytes (Chimpanzee).